Consider the following 239-residue polypeptide: Sugar fermentation stimulation protein homolog (239 aa).

It belongs to the SfsA family.

In Microcystis aeruginosa (strain NIES-843 / IAM M-2473), this protein is Sugar fermentation stimulation protein homolog.